Consider the following 234-residue polypeptide: Leucyl/phenylalanyl-tRNA--protein transferase (234 aa).

The protein belongs to the L/F-transferase family.

It localises to the cytoplasm. The enzyme catalyses N-terminal L-lysyl-[protein] + L-leucyl-tRNA(Leu) = N-terminal L-leucyl-L-lysyl-[protein] + tRNA(Leu) + H(+). It carries out the reaction N-terminal L-arginyl-[protein] + L-leucyl-tRNA(Leu) = N-terminal L-leucyl-L-arginyl-[protein] + tRNA(Leu) + H(+). It catalyses the reaction L-phenylalanyl-tRNA(Phe) + an N-terminal L-alpha-aminoacyl-[protein] = an N-terminal L-phenylalanyl-L-alpha-aminoacyl-[protein] + tRNA(Phe). Functions in the N-end rule pathway of protein degradation where it conjugates Leu, Phe and, less efficiently, Met from aminoacyl-tRNAs to the N-termini of proteins containing an N-terminal arginine or lysine. The chain is Leucyl/phenylalanyl-tRNA--protein transferase from Syntrophobacter fumaroxidans (strain DSM 10017 / MPOB).